Consider the following 65-residue polypeptide: Conotoxin Am6.4 (65 aa).

The disordered stretch occupies residues 1–33 (STGKRNAGKLTVTDDVEADRDTDPDDKDPSVHN). Positions 1-36 (STGKRNAGKLTVTDDVEADRDTDPDDKDPSVHNSWR) are excised as a propeptide. Residues 14-26 (DDVEADRDTDPDD) are compositionally biased toward acidic residues. Intrachain disulfides connect Cys40/Cys50, Cys45/Cys59, and Cys49/Cys64.

Is not hydroxylated. Expressed by the venom duct.

The protein localises to the secreted. Its function is as follows. Probable toxin that inhibits ion channels. In Conus amadis (Amadis cone), this protein is Conotoxin Am6.4.